The primary structure comprises 419 residues: L-rhamnose isomerase (419 aa).

Residues His-262, Asp-294, and Asp-296 each contribute to the Mn(2+) site.

The protein belongs to the rhamnose isomerase family. Homotetramer. Mn(2+) is required as a cofactor.

The protein resides in the cytoplasm. It catalyses the reaction L-rhamnopyranose = L-rhamnulose. The protein operates within carbohydrate degradation; L-rhamnose degradation; glycerone phosphate from L-rhamnose: step 1/3. Catalyzes the interconversion of L-rhamnose and L-rhamnulose. The protein is L-rhamnose isomerase of Salmonella typhi.